We begin with the raw amino-acid sequence, 114 residues long: Putative ANKRD40 C-terminal-like protein (114 aa).

In Homo sapiens (Human), this protein is Putative ANKRD40 C-terminal-like protein.